A 194-amino-acid chain; its full sequence is Potassium-transporting ATPase KdpC subunit (194 aa).

A helical transmembrane segment spans residues Leu12–Phe34.

The protein belongs to the KdpC family. As to quaternary structure, the system is composed of three essential subunits: KdpA, KdpB and KdpC.

The protein localises to the cell inner membrane. Part of the high-affinity ATP-driven potassium transport (or Kdp) system, which catalyzes the hydrolysis of ATP coupled with the electrogenic transport of potassium into the cytoplasm. This subunit acts as a catalytic chaperone that increases the ATP-binding affinity of the ATP-hydrolyzing subunit KdpB by the formation of a transient KdpB/KdpC/ATP ternary complex. The chain is Potassium-transporting ATPase KdpC subunit from Salmonella heidelberg (strain SL476).